The chain runs to 1046 residues: Protein HBT1 (1046 aa).

Disordered regions lie at residues 1 to 455, 469 to 894, and 908 to 1046; these read MNMN…AAEK, DYQQ…LGGA, and PSLI…RSEI. A Phosphoserine modification is found at Ser41. The span at 81–96 shows a compositional bias: basic and acidic residues; sequence KDSETPHEDTEADANR. 3 stretches are compositionally biased toward polar residues: residues 98–149, 175–191, and 228–301; these read ANVT…SPPT, IATTHNHSTSKAATSPV, and ANTG…NTDS. Ser303 carries the post-translational modification Phosphoserine. Positions 327 to 341 are enriched in polar residues; the sequence is VYTSTGPKSNVSSGM. Ser363 is subject to Phosphoserine. Polar residues-rich tracts occupy residues 389–408 and 420–429; these read QTGLKNDQVSGSDAIQQQTM and GFVSQQPSYH. The segment covering 430 to 455 has biased composition (basic and acidic residues); the sequence is DSNKNIQHPEKNKVDNKNISERAAEK. Polar residues predominate over residues 488–498; the sequence is YSSSAGKNKNL. Position 491 is a phosphoserine (Ser491). Positions 529–538 are enriched in basic and acidic residues; it reads GHMKYNDNGR. Over residues 548-559 the composition is skewed to polar residues; sequence QAGSQNTNNNID. Phosphoserine is present on Ser561. Positions 570-582 are enriched in polar residues; it reads GLSNDATTRNNVV. Over residues 586–597 the composition is skewed to basic and acidic residues; the sequence is MKDEDMNEDSTK. Acidic residues predominate over residues 605-619; the sequence is YLDDVEDYHENDIDD. Residues 621 to 630 are compositionally biased toward basic and acidic residues; that stretch reads SNAKKNDLYS. Ser671 carries the post-translational modification Phosphoserine. Over residues 742–756 the composition is skewed to polar residues; sequence FTNNPETGTTGNVDT. Residues 773-782 are compositionally biased toward basic and acidic residues; sequence DDSKNTDTHL. Polar residues-rich tracts occupy residues 792 to 802 and 837 to 855; these read NSRSGDTTYSK and SSEQKASYGSGGNSQNQEY. Tyr855 is modified (phosphotyrosine). The residue at position 857 (Ser857) is a Phosphoserine. Positions 868–890 are enriched in basic and acidic residues; that stretch reads KVLEEDAPGYKREVDLKNKRRTD. A compositionally biased stretch (polar residues) spans 922 to 951; it reads DTNTSSSQKPSEGTYPETTSYSIHNETTSQ. Residues 952-963 show a composition bias toward low complexity; the sequence is GRKVSVGSMGSG. Residues 964-976 are compositionally biased toward basic residues; it reads KSKHHHNHHRHSR. Ser1005 carries the phosphoserine modification. Acidic residues predominate over residues 1006–1019; sequence DEGEQDYHDDEQGE. A Phosphoserine modification is found at Ser1034.

As to quaternary structure, conjugated with HUB1. HUB1 has not the classical C-terminal Gly residue, so it is still unknown how conjugation may occur.

It is found in the cytoplasm. Its function is as follows. Polarity-determining protein which forms a conjugate with the ubiquitin-like modifier HUB1. Involved in bud site selection and cellular morphogenesis during conjugation. Required for survival during stationary phase. The chain is Protein HBT1 (HBT1) from Saccharomyces cerevisiae (strain ATCC 204508 / S288c) (Baker's yeast).